Consider the following 427-residue polypeptide: Glucose-6-phosphate isomerase (427 aa).

Glu277 (proton donor) is an active-site residue. Active-site residues include His298 and Lys414.

This sequence belongs to the GPI family.

Its subcellular location is the cytoplasm. It catalyses the reaction alpha-D-glucose 6-phosphate = beta-D-fructose 6-phosphate. The protein operates within carbohydrate biosynthesis; gluconeogenesis. It participates in carbohydrate degradation; glycolysis; D-glyceraldehyde 3-phosphate and glycerone phosphate from D-glucose: step 2/4. In terms of biological role, catalyzes the reversible isomerization of glucose-6-phosphate to fructose-6-phosphate. The sequence is that of Glucose-6-phosphate isomerase from Mycoplasma capricolum subsp. capricolum (strain California kid / ATCC 27343 / NCTC 10154).